Reading from the N-terminus, the 275-residue chain is Lysosome-associated membrane glycoprotein 5 (275 aa).

The signal sequence occupies residues Met1–Ala18. At Glu19 to Gln228 the chain is on the extracellular side. Asn24 and Asn42 each carry an N-linked (GlcNAc...) asparagine glycan. A helical transmembrane segment spans residues Thr229–Tyr249. Residues His250–Met275 lie on the Cytoplasmic side of the membrane.

This sequence belongs to the LAMP family. Post-translationally, glycosylated.

Its subcellular location is the cytoplasmic vesicle membrane. It is found in the cell membrane. It localises to the cell projection. The protein resides in the dendrite. The protein localises to the cytoplasmic vesicle. Its subcellular location is the secretory vesicle. It is found in the synaptic vesicle membrane. It localises to the growth cone membrane. The protein resides in the early endosome membrane. The protein localises to the recycling endosome. Its subcellular location is the endoplasmic reticulum-Golgi intermediate compartment membrane. It is found in the endosome membrane. Functionally, plays a role in short-term synaptic plasticity in a subset of GABAergic neurons in the brain. The protein is Lysosome-associated membrane glycoprotein 5 (lamp5) of Danio rerio (Zebrafish).